A 478-amino-acid polypeptide reads, in one-letter code: Spindle defective protein 3 (478 aa).

Residues 1–24 (MDQMTVEEKILEHQELEDGSSSFR) are Cytoplasmic-facing. A helical membrane pass occupies residues 25–45 (WLVSSTVIAIGGATVALYISG). Over 46-52 (KIDWKIP) the chain is Extracellular. The chain crosses the membrane as a helical span at residues 53-73 (AIEAGLALTAGGTITCGYLWF). At 74–478 (KKRVKTVRKL…LRRVDDDIIE (405 aa)) the chain is on the cytoplasmic side.

It is found in the mitochondrion. It localises to the mitochondrion outer membrane. Functionally, in the first mitotic division in embryos, required for mitotic spindle alignment and asymmetric cell division. Required for motor-driven chromosome movement and homolog searching within the nucleus, and subsequently ensures homologous chromosome pairing during the prophase stage of meiosis. In Caenorhabditis elegans, this protein is Spindle defective protein 3.